A 280-amino-acid chain; its full sequence is MTRKIAIYGKGGIGKSTTTQNTAAAMAYFFGKRIMIHGCDPKADSTRLILGGMMQTTVMDTLREEGEEGVTLDRVRLQGFGEIDCVESGGPEPGVGCAGRGVITAINLMEDLNAYGDELDFVFFDVLGDVVCGGFAMPVREGKAQEIYIVASGEMMALYAANNICRGMVKYAEQSGVRLGGIICNSRRVEGERELIEEFCARLGTRMIMFVPRDNIVQKAEFNRKTVTEFAPDSEQAQVYRELARRIIENDHFVIPTPMTMDEMESLVLKYGLLDLGEAS.

An ATP-binding site is contributed by 9 to 16; it reads GKGGIGKS. Cysteine 97 contributes to the [4Fe-4S] cluster binding site. At arginine 100 the chain carries ADP-ribosylarginine; by dinitrogenase reductase ADP-ribosyltransferase. Residue cysteine 132 participates in [4Fe-4S] cluster binding.

The protein belongs to the NifH/BchL/ChlL family. As to quaternary structure, homodimer. It depends on [4Fe-4S] cluster as a cofactor. In terms of processing, the reversible ADP-ribosylation of Arg-100 inactivates the nitrogenase reductase and regulates nitrogenase activity.

It catalyses the reaction N2 + 8 reduced [2Fe-2S]-[ferredoxin] + 16 ATP + 16 H2O = H2 + 8 oxidized [2Fe-2S]-[ferredoxin] + 2 NH4(+) + 16 ADP + 16 phosphate + 6 H(+). Functionally, the key enzymatic reactions in nitrogen fixation are catalyzed by the nitrogenase complex, which has 2 components: the iron protein and the molybdenum-iron protein. The sequence is that of Nitrogenase iron protein from Desulforudis audaxviator (strain MP104C).